A 121-amino-acid polypeptide reads, in one-letter code: Large ribosomal subunit protein bL20 (121 aa).

It belongs to the bacterial ribosomal protein bL20 family.

Binds directly to 23S ribosomal RNA and is necessary for the in vitro assembly process of the 50S ribosomal subunit. It is not involved in the protein synthesizing functions of that subunit. The polypeptide is Large ribosomal subunit protein bL20 (Chlamydia caviae (strain ATCC VR-813 / DSM 19441 / 03DC25 / GPIC) (Chlamydophila caviae)).